The chain runs to 404 residues: Probable cysteine protease atg4 (404 aa).

Cys-133 (nucleophile) is an active-site residue. Residues Asp-307 and His-309 contribute to the active site.

Belongs to the peptidase C54 family.

It localises to the cytoplasm. The protein localises to the nucleus. Its subcellular location is the preautophagosomal structure. It carries out the reaction [protein]-C-terminal L-amino acid-glycyl-phosphatidylethanolamide + H2O = [protein]-C-terminal L-amino acid-glycine + a 1,2-diacyl-sn-glycero-3-phosphoethanolamine. In terms of biological role, cysteine protease that plays a key role in cytoplasm to vacuole transport (Cvt) and autophagy by mediating both proteolytic activation and delipidation of ATG8. Required for selective autophagic degradation of the nucleus (nucleophagy) as well as for mitophagy which contributes to regulate mitochondrial quantity and quality by eliminating the mitochondria to a basal level to fulfill cellular energy requirements and preventing excess ROS production. The protease activity is required for proteolytic activation of ATG8: cleaves the C-terminal amino acid of ATG8 to reveal a C-terminal glycine. ATG8 ubiquitin-like activity requires the exposure of the glycine at the C-terminus for its conjugation to phosphatidylethanolamine (PE) and its insertion to membranes, which is necessary for autophagy. The ATG8-PE conjugate mediates tethering between adjacent membranes and stimulates membrane hemifusion, leading to expansion of the autophagosomal membrane during autophagy. In addition to the protease activity, also catalyzes deconjugation of PE-conjugated forms of ATG8 during macroautophagy: ATG8 delipidation is required to release the protein from membranes, which facilitates multiple events during macroautophagy, and especially for efficient autophagosome biogenesis, the assembly of ATG9-containing tubulovesicular clusters into phagophores/autophagosomes, and for the disassembly of PAS-associated ATG components. ATG8 delipidation by ATG4 also recycles ATG8-PE generated on inappropriate membranes to maintain a reservoir of unlipidated ATG8 that is required for autophagosome formation at the PAS. In Aspergillus niger (strain ATCC MYA-4892 / CBS 513.88 / FGSC A1513), this protein is Probable cysteine protease atg4 (atg4).